The chain runs to 541 residues: Protein wntless homolog A (541 aa).

The first 28 residues, 1-28, serve as a signal peptide directing secretion; that stretch reads MAGAIIENMSTKKLCMVGVALLLLQVLA. The Lumenal portion of the chain corresponds to 29-232; it reads FLVGGLIAPK…SIFQNGGFTM (204 aa). The chain crosses the membrane as a helical span at residues 233-253; that stretch reads VWFAMKTFLTPSIIIIMIWYW. At 254–268 the chain is on the cytoplasmic side; the sequence is RRITMMTRSPVLLEK. Residues 269–289 form a helical membrane-spanning segment; the sequence is VIFALGFSMTFINIPVEWFSI. Over 290–303 the chain is Lumenal; sequence GYDWTWMLLFGDIR. The chain crosses the membrane as a helical span at residues 304 to 324; the sequence is QGIFYAMLLSFWIIFCGEHMM. The Cytoplasmic segment spans residues 325–331; sequence DQTERNR. A helical transmembrane segment spans residues 332 to 352; that stretch reads ISVYWKQVGPIAFGSCCLFIF. Residues 353-379 are Lumenal-facing; sequence DMCERGVQLKNPFYSIWTTDVGAEIAM. A helical transmembrane segment spans residues 380–400; it reads AFIIVAGICACLYFLFLCFMV. The Cytoplasmic segment spans residues 401–431; it reads YQVFRNISGKQSNLPAMTKARRLHYEGLIFR. The chain crosses the membrane as a helical span at residues 432-452; it reads FKFLMIITLACAALTIVFFIT. Topologically, residues 453-471 are lumenal; sequence TQITEGNWKLGDLSIELNS. The chain crosses the membrane as a helical span at residues 472-492; that stretch reads AFFTGVYGMWNLYVFALMFLY. The Cytoplasmic portion of the chain corresponds to 493-541; it reads APSHKHYGDGQSNDGAGMSSGEELQLTTTITHIDGPTEVYRLAGKEAQE.

Belongs to the wntless family.

The protein resides in the golgi apparatus membrane. It is found in the cytoplasmic vesicle membrane. Functionally, required for a subset of Wnt-dependent developmental processes, in particular, eye and pronephros development. Regulates the secretion of wnt4, which is required for eye development. This is Protein wntless homolog A (wls-a) from Xenopus laevis (African clawed frog).